Here is a 108-residue protein sequence, read N- to C-terminus: Probable 4-amino-4-deoxy-L-arabinose-phosphoundecaprenol flippase subunit ArnE (108 aa).

The next 3 membrane-spanning stretches (helical) occupy residues 32–52 (PLLLWLGGSVLLLGMAMLVWL), 58–78 (VPVGVAYPMLSLNFIFVTLAA), and 85–105 (TLSLRHALGVILIVAGVAIMG). Positions 34 to 106 (LLWLGGSVLL…IVAGVAIMGS (73 aa)) constitute an EamA domain.

Belongs to the ArnE family. As to quaternary structure, heterodimer of ArnE and ArnF.

The protein localises to the cell inner membrane. The protein operates within bacterial outer membrane biogenesis; lipopolysaccharide biosynthesis. Functionally, translocates 4-amino-4-deoxy-L-arabinose-phosphoundecaprenol (alpha-L-Ara4N-phosphoundecaprenol) from the cytoplasmic to the periplasmic side of the inner membrane. This chain is Probable 4-amino-4-deoxy-L-arabinose-phosphoundecaprenol flippase subunit ArnE, found in Erwinia tasmaniensis (strain DSM 17950 / CFBP 7177 / CIP 109463 / NCPPB 4357 / Et1/99).